The sequence spans 551 residues: Trehalose-6-phosphate hydrolase (551 aa).

Aspartate 200 (nucleophile) is an active-site residue. The Proton donor role is filled by glutamate 251.

This sequence belongs to the glycosyl hydrolase 13 family.

Its subcellular location is the cytoplasm. The catalysed reaction is alpha,alpha-trehalose 6-phosphate + H2O = D-glucose 6-phosphate + D-glucose. Its function is as follows. Hydrolyzes trehalose-6-phosphate to glucose and glucose 6-phosphate. Can also very effectively hydrolyze p-nitrophenyl-alpha-D-glucopyranoside, but it does not recognize trehalose, sucrose, maltose, isomaltose, or maltodextrins. The sequence is that of Trehalose-6-phosphate hydrolase (treC) from Escherichia coli (strain K12).